The primary structure comprises 744 residues: CCR4-NOT transcription complex subunit 10 (744 aa).

A compositionally biased stretch (basic and acidic residues) spans Met-1–Gly-16. A disordered region spans residues Met-1–Asp-25. Position 2 is an N-acetylalanine (Ala-2). Positions Lys-74–Val-107 form a coiled coil. Residues Asn-183–Asp-199 are compositionally biased toward low complexity. Disordered stretches follow at residues Asn-183–Lys-204, Gln-477–Ser-521, and Val-602–Tyr-634. The span at Gly-484–Thr-495 shows a compositional bias: polar residues. Residues Glu-496–Ser-506 are compositionally biased toward low complexity. Over residues Val-602 to Asp-612 the composition is skewed to polar residues.

Belongs to the CNOT10 family. In terms of assembly, component of the CCR4-NOT complex; distinct complexes seem to exist that differ in the participation of probably mutually exclusive catalytic subunits. CNOT10 and CNOT11 form a subcomplex docked to the CNOT1 scaffold.

The protein resides in the cytoplasm. It localises to the nucleus. Its function is as follows. Component of the CCR4-NOT complex which is one of the major cellular mRNA deadenylases and is linked to various cellular processes including bulk mRNA degradation, miRNA-mediated repression, translational repression during translational initiation and general transcription regulation. Additional complex functions may be a consequence of its influence on mRNA expression. Is not required for association of CNOT7 to the CCR4-NOT complex. The polypeptide is CCR4-NOT transcription complex subunit 10 (CNOT10) (Homo sapiens (Human)).